Reading from the N-terminus, the 210-residue chain is MAALSSATKRLGRLIPHSSVLFVCDVQEVFRGLTFQLPTVIHGTNTMVSAAKLLNVPVVVTTQYGSRLGSTVSEISKNLEDAPDVKVFDKMKFSMLVPEVERHLTTNMPQRKSVLLCGIETHVCVLQTCLDLLDKGYDVHVVSDAVSSSTSYNRSMALERIRQSGAYITSVESAIFQLANDAGNPEFKSISKLIKEHLKVQNGFDTGARI.

Residues aspartate 25, lysine 90, and cysteine 124 contribute to the active site.

The protein belongs to the isochorismatase family.

The protein resides in the secreted. The protein localises to the host cytoplasm. It is found in the host nucleus. The catalysed reaction is isochorismate + H2O = (2S,3S)-2,3-dihydroxy-2,3-dihydrobenzoate + pyruvate. Its function is as follows. Secreted isochorismatase required for full virulence of P.sojae. Suppresses salicylate-mediated innate immunity of the host by disrupting the plant salicylate metabolism pathway via hydrolysis of its isochorismate precursor. The polypeptide is Secreted isochorismatase effector Isc1 (Phytophthora sojae (strain P6497) (Soybean stem and root rot agent)).